The sequence spans 448 residues: Homogentisate 1,2-dioxygenase (448 aa).

The disordered stretch occupies residues 1 to 26 (MNMLAPAAKNAFTPASPDRPAYQSGF). The Proton acceptor role is filled by histidine 302. Residues histidine 345 and glutamate 351 each contribute to the Fe cation site. Tyrosine 360 and histidine 381 together coordinate homogentisate. Fe cation is bound at residue histidine 381.

Belongs to the homogentisate dioxygenase family. Hexamer; dimer of trimers. Requires Fe cation as cofactor.

It carries out the reaction homogentisate + O2 = 4-maleylacetoacetate + H(+). The protein operates within amino-acid degradation; L-phenylalanine degradation; acetoacetate and fumarate from L-phenylalanine: step 4/6. In terms of biological role, involved in the catabolism of homogentisate (2,5-dihydroxyphenylacetate or 2,5-OH-PhAc), a central intermediate in the degradation of phenylalanine and tyrosine. Catalyzes the oxidative ring cleavage of the aromatic ring of homogentisate to yield maleylacetoacetate. The polypeptide is Homogentisate 1,2-dioxygenase (Ralstonia nicotianae (strain ATCC BAA-1114 / GMI1000) (Ralstonia solanacearum)).